Consider the following 161-residue polypeptide: Nucleotide-binding protein Ssed_3443 (161 aa).

Belongs to the YajQ family.

In terms of biological role, nucleotide-binding protein. The protein is Nucleotide-binding protein Ssed_3443 of Shewanella sediminis (strain HAW-EB3).